The following is a 318-amino-acid chain: 2-keto-3-deoxygluconate permease (318 aa).

A run of 10 helical transmembrane segments spans residues 10–30, 42–62, 82–102, 109–129, 139–159, 163–183, 201–221, 224–244, 257–277, and 289–309; these read LPGGMMLVPLLLGALCHTLWP, GLISGTVPILAVWFFCMGATI, IAVAWLVAVLCAPLLPIGGVS, LSVLALVAAMDMTNGGLYAAL, AGAVVLMSLESGPLISMLILG, LASFEPQLFVGAVLPLLLGFA, TLVPFFGFALGNTLDLSTIAH, TSGVLLGVAVVVITGLPLLLA, VAASSTAGAAVATPALIAGMA, and ALVASAVIVTSLLVPLLTALY.

The protein belongs to the KdgT transporter family.

The protein resides in the cell inner membrane. It carries out the reaction 2-dehydro-3-deoxy-D-gluconate(in) + H(+)(in) = 2-dehydro-3-deoxy-D-gluconate(out) + H(+)(out). Functionally, catalyzes the proton-dependent uptake of 2-keto-3-deoxygluconate (KDG) into the cell. The polypeptide is 2-keto-3-deoxygluconate permease (Xanthomonas axonopodis pv. citri (strain 306)).